The chain runs to 1444 residues: DNA polymerase III PolC-type (1444 aa).

The disordered stretch occupies residues Glu196–Leu218. Polar residues predominate over residues Glu207–Ala216. In terms of domain architecture, Exonuclease spans Tyr428 to Ala584.

The protein belongs to the DNA polymerase type-C family. PolC subfamily.

It localises to the cytoplasm. The catalysed reaction is DNA(n) + a 2'-deoxyribonucleoside 5'-triphosphate = DNA(n+1) + diphosphate. Required for replicative DNA synthesis. This DNA polymerase also exhibits 3' to 5' exonuclease activity. The sequence is that of DNA polymerase III PolC-type from Listeria welshimeri serovar 6b (strain ATCC 35897 / DSM 20650 / CCUG 15529 / CIP 8149 / NCTC 11857 / SLCC 5334 / V8).